The primary structure comprises 294 residues: Ribosomal protein L11 methyltransferase (294 aa).

Thr145, Gly166, Asp188, and Asn227 together coordinate S-adenosyl-L-methionine.

Belongs to the methyltransferase superfamily. PrmA family.

It is found in the cytoplasm. The catalysed reaction is L-lysyl-[protein] + 3 S-adenosyl-L-methionine = N(6),N(6),N(6)-trimethyl-L-lysyl-[protein] + 3 S-adenosyl-L-homocysteine + 3 H(+). Its function is as follows. Methylates ribosomal protein L11. The sequence is that of Ribosomal protein L11 methyltransferase from Hydrogenovibrio crunogenus (strain DSM 25203 / XCL-2) (Thiomicrospira crunogena).